The following is a 146-amino-acid chain: Basic phospholipase A2 73 (146 aa).

The signal sequence occupies residues 1 to 19 (MYPAHLLVLLAVCVSLLGA). Residues 20 to 27 (ASIPPLPL) constitute a propeptide that is removed on maturation. Disulfide bonds link C38/C98, C54/C145, C56/C72, C71/C126, C78/C119, C87/C112, and C105/C117. Residues Y55, G57, and G59 each coordinate Ca(2+). H75 is an active-site residue. D76 is a Ca(2+) binding site. The active site involves D120.

It belongs to the phospholipase A2 family. Group I subfamily. D49 sub-subfamily. Requires Ca(2+) as cofactor. As to expression, expressed by the venom gland.

Its subcellular location is the secreted. The enzyme catalyses a 1,2-diacyl-sn-glycero-3-phosphocholine + H2O = a 1-acyl-sn-glycero-3-phosphocholine + a fatty acid + H(+). Snake venom phospholipase A2 (PLA2) that inhibits neuromuscular transmission by blocking acetylcholine release from the nerve termini. PLA2 catalyzes the calcium-dependent hydrolysis of the 2-acyl groups in 3-sn-phosphoglycerides. This Hydrophis hardwickii (Hardwick's spine-bellied seasnake) protein is Basic phospholipase A2 73.